A 658-amino-acid polypeptide reads, in one-letter code: Aminopeptidase P1 (658 aa).

2 residues coordinate a peptide: Arg69 and His436. Positions 456, 467, and 530 each coordinate Mn(2+). Residues His530, His539, and Glu563 each coordinate a peptide. Mn(2+) contacts are provided by Glu563 and Glu577.

The protein belongs to the peptidase M24B family. Homodimer. Interacts with N-1-naphthylphthalamic acid (NPA). Interacts with NBCL/BOP2/COCH around the plasma membrane and in the nucleus; this interaction disturbs its regulation of the nuclear transcription factor Y subunit (NF-YA1). Mn(2+) serves as cofactor. Zn(2+) is required as a cofactor. As to expression, expressed at similar levels in shoot apical meristems (SAM), root meristems (RM), root apical meristems (RAM), roots and leaves and, to a slightly lesser degree, in root nodules.

It is found in the nucleus. The protein localises to the cytoplasm. Its subcellular location is the cell membrane. The protein resides in the microsome membrane. The enzyme catalyses Release of any N-terminal amino acid, including proline, that is linked to proline, even from a dipeptide or tripeptide.. Its function is as follows. Catalyzes the removal of a penultimate prolyl residue from the N-termini of peptides, such as Arg-Pro-Pro. Aminopeptidase that binds to the auxin transport inhibitor N-1-naphthylphthalamic acid (NPA). May play a negative role in the regulation of PIN auxin transport proteins. Involved in the coordination of the symbiotic nodule developmental program; prevents the formation of root nodules by regulating the expression of the nuclear transcription factor Y subunit (NF-YA1), a key nodulin. This is Aminopeptidase P1 from Lotus japonicus (Lotus corniculatus var. japonicus).